A 957-amino-acid chain; its full sequence is Glycine dehydrogenase (decarboxylating) (957 aa).

N6-(pyridoxal phosphate)lysine is present on Lys708.

It belongs to the GcvP family. The glycine cleavage system is composed of four proteins: P, T, L and H. It depends on pyridoxal 5'-phosphate as a cofactor.

The enzyme catalyses N(6)-[(R)-lipoyl]-L-lysyl-[glycine-cleavage complex H protein] + glycine + H(+) = N(6)-[(R)-S(8)-aminomethyldihydrolipoyl]-L-lysyl-[glycine-cleavage complex H protein] + CO2. Functionally, the glycine cleavage system catalyzes the degradation of glycine. The P protein binds the alpha-amino group of glycine through its pyridoxal phosphate cofactor; CO(2) is released and the remaining methylamine moiety is then transferred to the lipoamide cofactor of the H protein. The protein is Glycine dehydrogenase (decarboxylating) of Escherichia coli (strain UTI89 / UPEC).